Reading from the N-terminus, the 440-residue chain is Origin recognition complex subunit 4 (440 aa).

64–71 (GPKGSGKS) is a binding site for ATP.

It belongs to the ORC4 family. ORC is composed of six subunits.

Its subcellular location is the nucleus. In terms of biological role, component of the origin recognition complex (ORC) that binds origins of replication. DNA-binding is ATP-dependent, however specific DNA sequences that define origins of replication have not been identified so far. ORC is required to assemble the pre-replication complex necessary to initiate DNA replication. The polypeptide is Origin recognition complex subunit 4 (orcD) (Dictyostelium discoideum (Social amoeba)).